The sequence spans 373 residues: Dual-specificity RNA methyltransferase RlmN (373 aa).

The active-site Proton acceptor is the Glu94. Positions 100–339 (DGDRATLCVS…VTVRKTRGDD (240 aa)) constitute a Radical SAM core domain. Cysteines 107 and 344 form a disulfide. 3 residues coordinate [4Fe-4S] cluster: Cys114, Cys118, and Cys121. S-adenosyl-L-methionine-binding positions include 168–169 (GE), Ser200, 222–224 (SLH), and Asn301. Cys344 serves as the catalytic S-methylcysteine intermediate.

It belongs to the radical SAM superfamily. RlmN family. Requires [4Fe-4S] cluster as cofactor.

The protein localises to the cytoplasm. The enzyme catalyses adenosine(2503) in 23S rRNA + 2 reduced [2Fe-2S]-[ferredoxin] + 2 S-adenosyl-L-methionine = 2-methyladenosine(2503) in 23S rRNA + 5'-deoxyadenosine + L-methionine + 2 oxidized [2Fe-2S]-[ferredoxin] + S-adenosyl-L-homocysteine. It carries out the reaction adenosine(37) in tRNA + 2 reduced [2Fe-2S]-[ferredoxin] + 2 S-adenosyl-L-methionine = 2-methyladenosine(37) in tRNA + 5'-deoxyadenosine + L-methionine + 2 oxidized [2Fe-2S]-[ferredoxin] + S-adenosyl-L-homocysteine. In terms of biological role, specifically methylates position 2 of adenine 2503 in 23S rRNA and position 2 of adenine 37 in tRNAs. m2A2503 modification seems to play a crucial role in the proofreading step occurring at the peptidyl transferase center and thus would serve to optimize ribosomal fidelity. This is Dual-specificity RNA methyltransferase RlmN from Photobacterium profundum (strain SS9).